The chain runs to 356 residues: Guanine nucleotide-binding protein alpha-17 subunit (356 aa).

The N-myristoyl glycine moiety is linked to residue G2. C4 carries the S-palmitoyl cysteine lipid modification. In terms of domain architecture, G-alpha spans 32-356 (SIVKLLLLGA…QKNLQKAGMM (325 aa)). The segment at 35-48 (KLLLLGAGECGKST) is G1 motif. Residues 40 to 47 (GAGECGKS), 177 to 183 (LYSRVAT), 202 to 206 (DVGGQ), 271 to 274 (NKKD), and A328 contribute to the GTP site. Mg(2+)-binding residues include S47 and T183. Residues 175–183 (DILYSRVAT) are G2 motif. The segment at 198 to 207 (FRVFDVGGQR) is G3 motif. The interval 267 to 274 (ILFMNKKD) is G4 motif. Residues 326–331 (TCATDT) are G5 motif.

Belongs to the G-alpha family. G proteins are composed of 3 units; alpha, beta and gamma. The alpha chain contains the guanine nucleotide binding site.

The protein resides in the cell projection. It is found in the cilium. Its subcellular location is the dendrite. In terms of biological role, guanine nucleotide-binding proteins (G proteins) are involved as modulators or transducers in various transmembrane signaling systems. This specific G-alpha subunit plays an important role in olfaction and in cilia morphogenesis. Involved in chemotactic responses to attractants diacetyl, pyrazine, 2,4,5-trimethylthiazole, benzaldehyde, isoamyl alcohol, butanone and 2,3-pentanedione. Displays a redundant function with gpa-3 in chemotactic responses. Involved in avoidance responses to copper, sodium dodecyl sulfate and linoleic acid. Involved in osmotic avoidance and mechanosensory responses. Involved in specifying fan-like morphology of cilia of head sensory neurons AWC. This chain is Guanine nucleotide-binding protein alpha-17 subunit (odr-3), found in Caenorhabditis briggsae.